The chain runs to 505 residues: Argininosuccinate lyase (505 aa).

This sequence belongs to the lyase 1 family. Argininosuccinate lyase subfamily.

It is found in the cytoplasm. The catalysed reaction is 2-(N(omega)-L-arginino)succinate = fumarate + L-arginine. It functions in the pathway amino-acid biosynthesis; L-arginine biosynthesis; L-arginine from L-ornithine and carbamoyl phosphate: step 3/3. This is Argininosuccinate lyase from Rhodococcoides fascians (Rhodococcus fascians).